A 549-amino-acid chain; its full sequence is Biotin-dependent acetyl-/propionyl-coenzyme A carboxylase beta5 subunit (549 aa).

Residues 25-281 enclose the CoA carboxyltransferase N-terminal domain; it reads TAGKLAELHK…NNFTDAPRYS (257 aa). Residues 295–542 enclose the CoA carboxyltransferase C-terminal domain; that stretch reads AKDLELDTLI…ERKIAHLPPK (248 aa).

This sequence belongs to the AccD/PCCB family. As to quaternary structure, the biotin-dependent acyl-CoA carboxylase complex is composed of AccA3, which contains the biotin carboxylase (BC) and biotin carboxyl carrier protein (BCCP) domains, and AccD5, which contains the carboxyl transferase (CT) domain.

The catalysed reaction is N(6)-carboxybiotinyl-L-lysyl-[protein] + acetyl-CoA = N(6)-biotinyl-L-lysyl-[protein] + malonyl-CoA. It carries out the reaction N(6)-carboxybiotinyl-L-lysyl-[protein] + propanoyl-CoA = methylmalonyl-CoA + N(6)-biotinyl-L-lysyl-[protein]. It participates in lipid metabolism; mycolic acid biosynthesis. Its function is as follows. Component of a biotin-dependent acyl-CoA carboxylase complex. This subunit transfers the CO2 from carboxybiotin to the CoA ester substrate. When associated with the alpha3 subunit AccA3, is involved in the carboxylation of acetyl-CoA and propionyl-CoA. In Mycobacterium leprae (strain TN), this protein is Biotin-dependent acetyl-/propionyl-coenzyme A carboxylase beta5 subunit (accD5).